Here is an 81-residue protein sequence, read N- to C-terminus: Beta-toxin Ct13 (81 aa).

The N-terminal stretch at 1-18 (MKVLILIIASVLLIGVEC) is a signal peptide. Positions 19–78 (KDGFPVDSEGCILLPCATRAYCSVNCKFMKGSGGSCDTLACHCKGLPEDAKVQDKPTNKC) constitute an LCN-type CS-alpha/beta domain. Disulfide bonds link Cys-29-Cys-78, Cys-34-Cys-54, Cys-40-Cys-59, and Cys-44-Cys-61. At Cys-78 the chain carries Cysteine amide.

The protein belongs to the long (4 C-C) scorpion toxin superfamily. Sodium channel inhibitor family. Beta subfamily. In terms of tissue distribution, expressed by the venom gland.

It localises to the secreted. Beta toxins bind voltage-independently at site-4 of sodium channels (Nav) and shift the voltage of activation toward more negative potentials thereby affecting sodium channel activation and promoting spontaneous and repetitive firing. This is Beta-toxin Ct13 from Centruroides tecomanus (Scorpion).